Here is a 380-residue protein sequence, read N- to C-terminus: Cytochrome b (380 aa).

The next 4 membrane-spanning stretches (helical) occupy residues 34–54 (FGSL…LLAT), 78–99 (WLIR…YLHI), 114–134 (WNTG…GYVL), and 179–199 (FFAL…IHLT). The heme b site is built by His84 and His98. The heme b site is built by His183 and His197. Residue His202 coordinates a ubiquinone. 4 helical membrane passes run 227-247 (LKDI…ALFS), 289-309 (LGGV…PFLH), 321-341 (ISQL…WVGS), and 348-368 (FIII…ILFP).

Belongs to the cytochrome b family. The cytochrome bc1 complex contains 11 subunits: 3 respiratory subunits (MT-CYB, CYC1 and UQCRFS1), 2 core proteins (UQCRC1 and UQCRC2) and 6 low-molecular weight proteins (UQCRH/QCR6, UQCRB/QCR7, UQCRQ/QCR8, UQCR10/QCR9, UQCR11/QCR10 and a cleavage product of UQCRFS1). This cytochrome bc1 complex then forms a dimer. The cofactor is heme b.

The protein resides in the mitochondrion inner membrane. Its function is as follows. Component of the ubiquinol-cytochrome c reductase complex (complex III or cytochrome b-c1 complex) that is part of the mitochondrial respiratory chain. The b-c1 complex mediates electron transfer from ubiquinol to cytochrome c. Contributes to the generation of a proton gradient across the mitochondrial membrane that is then used for ATP synthesis. In Pelecanoides magellani (Magellanic diving petrel), this protein is Cytochrome b (MT-CYB).